Reading from the N-terminus, the 102-residue chain is MKSQKIRIRLKAFDHHMLDQSAQKIVETARRTGASVAGPVPLPTEKSIYTILRSPHVNKDSREQFEMRTHKRLIDILEPNPKTVDALMRLDLPAGVDIEIKL.

This sequence belongs to the universal ribosomal protein uS10 family. In terms of assembly, part of the 30S ribosomal subunit.

Involved in the binding of tRNA to the ribosomes. The protein is Small ribosomal subunit protein uS10 of Pelotomaculum thermopropionicum (strain DSM 13744 / JCM 10971 / SI).